The primary structure comprises 276 residues: 2-dehydro-3-deoxyphosphooctonate aldolase (276 aa).

This sequence belongs to the KdsA family.

The protein resides in the cytoplasm. It catalyses the reaction D-arabinose 5-phosphate + phosphoenolpyruvate + H2O = 3-deoxy-alpha-D-manno-2-octulosonate-8-phosphate + phosphate. It participates in carbohydrate biosynthesis; 3-deoxy-D-manno-octulosonate biosynthesis; 3-deoxy-D-manno-octulosonate from D-ribulose 5-phosphate: step 2/3. It functions in the pathway bacterial outer membrane biogenesis; lipopolysaccharide biosynthesis. The sequence is that of 2-dehydro-3-deoxyphosphooctonate aldolase from Xanthomonas euvesicatoria pv. vesicatoria (strain 85-10) (Xanthomonas campestris pv. vesicatoria).